The following is a 348-amino-acid chain: MALSAYFLLCLSVLGLDAIYGFGFRNGFLELMANSYRERKLSGTAEPLQGNITGTGLDELLGNLIVFYWPVLDGNHPGLSLQAFHFLGAIVAVWVAIQVQSWRSPNRNSLLRSPTLFAMLSQVVAIAVIVPLWCAISIWSSSSPRPITRAVSASAAHSIRLIPISMVLGFGIPTIGMLLPESTHQNLFSKQIAIAVWQIWPIYVALWHWGLRVLFRSRLKEGISVRTACRTACSFAFVCAIIPHAVSWGLSLTLIPTNLLADVLPWQFAGGGTVQVQSMAQGGLWFLQWDHLIGMGSFLLWAMHMRWTVEQQSSFLQTCYLALKVGVLCLISGPCGAAVWLLWEESQF.

A helical membrane pass occupies residues 2-22 (ALSAYFLLCLSVLGLDAIYGF). N-linked (GlcNAc...) asparagine glycosylation occurs at asparagine 51. 7 helical membrane-spanning segments follow: residues 77 to 97 (PGLS…WVAI), 116 to 136 (LFAM…WCAI), 161 to 181 (LIPI…LLPE), 191 to 211 (QIAI…HWGL), 235 to 255 (FAFV…LTLI), 283 to 303 (GLWF…LWAM), and 323 to 343 (LKVG…WLLW).

The protein belongs to the membrane-bound ascI terpene cyclase family.

It is found in the membrane. It functions in the pathway mycotoxin biosynthesis. In terms of biological role, hydrolase; part of the gene cluster that mediates the biosynthesis of citreoviridin, an inhibitor of the of F1-ATPase beta-subunit. The HR-PKS ctvA accepts acetyl-CoA as the starter unit and catalyzes eight iterations of malonyl-CoA extension and four iterations of SAM-dependent methylation at C4, C12, C14, and C16. The KR and DH domains selectively act on the first six iterations to generate the hexaene chain. In the last three iterations, the KR and DH domains terminate their functions to yield a beta,delta-diketo ester moiety, which then undergoes intramolecular cyclization to yield an alpha-pyrone intermediate. Subsequently, ctvB methylates the alpha-pyrone hydroxyl group to generate citreomontanin. In order to form the tetrahydrofuran ring with the correct stereochemistry, the terminal alkenes of citreomontanin need to undergo isomerization to yield a (17Z)-hexaene, a step that could be catalyzed by ctvC. The (17Z)-hexaene then undergoes bisepoxidation by ctvC to form a (17R,16R,15S,14R)-bisepoxide moiety. Lastly, ctvD acts as a regioselective hydrolase to form the tetrahydrofuran ring with the substituents in the correct absolute configuration, completing the biosynthesis of citreoviridin. The protein is Terpene cyclase ctvD of Aspergillus terreus (strain NIH 2624 / FGSC A1156).